The primary structure comprises 653 residues: Polyadenylate-binding protein, cytoplasmic and nuclear (653 aa).

Basic and acidic residues predominate over residues 1 to 10 (MPSTDLKKQA). Positions 1-77 (MPSTDLKKQA…SVATPSGTAP (77 aa)) are disordered. A compositionally biased stretch (polar residues) spans 17–27 (DVNTNNEAVES). The span at 53 to 68 (AAEPSESTSTPTNASS) shows a compositional bias: low complexity. The RRM 1 domain maps to 80 to 158 (ASLYVGELDP…RPCRIMWSQR (79 aa)). At T167 the chain carries Phosphothreonine. RRM domains lie at 168–245 (GNVF…HHVS), 261–338 (TNVY…RAQK), and 364–441 (VNLF…LAQR). Positions 569-646 (PERFTAADLA…AIGVLQEFVD (78 aa)) constitute a PABC domain.

This sequence belongs to the polyadenylate-binding protein type-1 family. As to quaternary structure, interacts with cid13.

It is found in the cytoplasm. The protein localises to the nucleus. Functionally, binds the poly(A) tail of mRNA. Appears to be an important mediator of the multiple roles of the poly(A) tail in mRNA biogenesis, stability and translation. In the nucleus, involved in both mRNA cleavage and polyadenylation. Is also required for efficient mRNA export to the cytoplasm. Acts in concert with a poly(A)-specific nuclease (PAN) to affect poly(A) tail shortening, which may occur concomitantly with either nucleocytoplasmic mRNA transport or translational initiation. In the cytoplasm, stimulates translation initiation and regulates mRNA decay through translation termination-coupled poly(A) shortening, probably mediated by PAN. This chain is Polyadenylate-binding protein, cytoplasmic and nuclear (pab1), found in Schizosaccharomyces pombe (strain 972 / ATCC 24843) (Fission yeast).